A 419-amino-acid polypeptide reads, in one-letter code: LanC-like protein 3 homolog (419 aa).

Belongs to the LanC-like protein family.

This is LanC-like protein 3 homolog from Drosophila melanogaster (Fruit fly).